Reading from the N-terminus, the 724-residue chain is MGALTWLSVVAAAASTALAMTPEKMISAPRRSEVIPNPSGEIGVFSTSQYSFEKHKRSSWWSLLDLKTGQSKILTNDSSVSEILWLGTDDSTLLYVNGTNADVPGGVELWVTQVSSFTNGYKAASLPAAFSGFKTVTTKSGDIRFVAYAQSYANGTAYNEELVEKPLSSARIYDSIYVRHWDSYLTTTFNAVFSGTLKKGNNKKGYTLDGAVKNLVSPVRNAESPYPPFGGASDYDLSPNGKWVAFKSKAPELPKANFTTAYIYLVPHDGSEKAFAINGPDSPGTPKGIKGDANSPVFSPNSEKLAYLQMKDETYEADRRVLYVYSIGSKKTIPSVAGNWDRSPDSIKWTPDGKTLIVGSEDKGRSRLFAIPATARDDFKPKNFTDGGAVSAYYFLPDRSLLVTGTAIWTNWNVYTASPAKGVIKTLASANEIDPELKGLGPSDVSEIYFKGNWTDIHAWVVYPENFDKSKKYPLAFLIHGGPQGSWADSWSSRWNPKTFADQGYVVVAPNPTGSTGFGQKLTDEIQNNWGGAPYDDLVKCWEYVNKNLPFVDTEHGIAAGASYGGFMVNWIQGNDLGRRFKALVSHDGTFVADAKISTDELWFMQREFNGTFWDARDNYRRFDPSAPEHIRQFGTPQLVIHNDKDYRLAVAEGLSLFNVLQERGVPSRFLNFPDENHWVVNPENSLVWHQQVLGWINKYSGIEKSNPGAVSLDDTIVPVVNYN.

Residues 1–19 (MGALTWLSVVAAAASTALA) form the signal peptide. Residues Asn76, Asn97, Asn154, Asn257, Asn383, and Asn453 are each glycosylated (N-linked (GlcNAc...) asparagine). Ser563 acts as the Charge relay system in catalysis. Asn610 carries an N-linked (GlcNAc...) asparagine glycan. Residues Asp646 and His678 each act as charge relay system in the active site.

The protein belongs to the peptidase S9C family.

It localises to the secreted. Functionally, extracellular dipeptidyl-peptidase which removes N-terminal dipeptides sequentially from polypeptides having unsubstituted N-termini. In Aspergillus clavatus (strain ATCC 1007 / CBS 513.65 / DSM 816 / NCTC 3887 / NRRL 1 / QM 1276 / 107), this protein is Probable dipeptidyl-peptidase 5 (dpp5).